A 427-amino-acid polypeptide reads, in one-letter code: Glutamate-1-semialdehyde 2,1-aminomutase (427 aa).

Lys265 is modified (N6-(pyridoxal phosphate)lysine).

This sequence belongs to the class-III pyridoxal-phosphate-dependent aminotransferase family. HemL subfamily. Homodimer. The cofactor is pyridoxal 5'-phosphate.

The protein resides in the cytoplasm. The enzyme catalyses (S)-4-amino-5-oxopentanoate = 5-aminolevulinate. It participates in porphyrin-containing compound metabolism; protoporphyrin-IX biosynthesis; 5-aminolevulinate from L-glutamyl-tRNA(Glu): step 2/2. This Teredinibacter turnerae (strain ATCC 39867 / T7901) protein is Glutamate-1-semialdehyde 2,1-aminomutase.